Consider the following 148-residue polypeptide: Ferredoxin-thioredoxin reductase catalytic chain, chloroplastic (148 aa).

The transit peptide at 1–35 (MKALQASTSYSFFSKSSSATLQRRTHRPQCVILSK) directs the protein to the chloroplast. A [4Fe-4S] cluster-binding site is contributed by Cys87. Cys89 functions as the Nucleophile in the catalytic mechanism. Cys89 and Cys119 form a disulfide bridge. [4Fe-4S] cluster-binding residues include Cys106, Cys108, and Cys117.

The protein belongs to the ferredoxin thioredoxin reductase beta subunit family. Heterodimer of subunit A (variable subunit) and subunit B (catalytic subunit). Heterodimeric FTR forms a complex with ferredoxin and thioredoxin. The cofactor is [4Fe-4S] cluster.

The protein resides in the plastid. Its subcellular location is the chloroplast. It carries out the reaction [thioredoxin]-disulfide + 2 reduced [2Fe-2S]-[ferredoxin] + 2 H(+) = [thioredoxin]-dithiol + 2 oxidized [2Fe-2S]-[ferredoxin]. Functionally, catalytic subunit of the ferredoxin-thioredoxin reductase (FTR), which catalyzes the two-electron reduction of thioredoxins by the electrons provided by reduced ferredoxin. This is Ferredoxin-thioredoxin reductase catalytic chain, chloroplastic from Spinacia oleracea (Spinach).